The sequence spans 351 residues: Anthranilate phosphoribosyltransferase (351 aa).

Residues glycine 84, 87 to 88 (GD), 95 to 98 (NISS), 113 to 121 (KHGNRGASS), and alanine 125 each bind 5-phospho-alpha-D-ribose 1-diphosphate. Glycine 84 lines the anthranilate pocket. Residue serine 97 participates in Mg(2+) binding. Asparagine 116 is a binding site for anthranilate. Anthranilate is bound at residue arginine 171. Positions 229 and 230 each coordinate Mg(2+).

Belongs to the anthranilate phosphoribosyltransferase family. In terms of assembly, homodimer. Mg(2+) serves as cofactor.

The enzyme catalyses N-(5-phospho-beta-D-ribosyl)anthranilate + diphosphate = 5-phospho-alpha-D-ribose 1-diphosphate + anthranilate. It participates in amino-acid biosynthesis; L-tryptophan biosynthesis; L-tryptophan from chorismate: step 2/5. Functionally, catalyzes the transfer of the phosphoribosyl group of 5-phosphorylribose-1-pyrophosphate (PRPP) to anthranilate to yield N-(5'-phosphoribosyl)-anthranilate (PRA). This chain is Anthranilate phosphoribosyltransferase, found in Clavibacter michiganensis subsp. michiganensis (strain NCPPB 382).